A 255-amino-acid chain; its full sequence is D-aminoacyl-tRNA deacylase (255 aa).

This sequence belongs to the DtdA deacylase family. In terms of assembly, monomer. Requires Zn(2+) as cofactor.

The catalysed reaction is a D-aminoacyl-tRNA + H2O = a tRNA + a D-alpha-amino acid + H(+). It carries out the reaction glycyl-tRNA(Ala) + H2O = tRNA(Ala) + glycine + H(+). Its function is as follows. D-aminoacyl-tRNA deacylase with broad substrate specificity. By recycling D-aminoacyl-tRNA to D-amino acids and free tRNA molecules, this enzyme counteracts the toxicity associated with the formation of D-aminoacyl-tRNA entities in vivo. This chain is D-aminoacyl-tRNA deacylase, found in Picrophilus torridus (strain ATCC 700027 / DSM 9790 / JCM 10055 / NBRC 100828 / KAW 2/3).